We begin with the raw amino-acid sequence, 442 residues long: U11/U12 small nuclear ribonucleoprotein 65 kDa protein (442 aa).

One can recognise an RRM 1 domain in the interval 28 to 102 (VTLLVRHLPD…KVLQVQRANK (75 aa)). Disordered stretches follow at residues 101–138 (NKPN…QILS), 200–242 (LALP…GRKR), and 290–317 (SKVT…DSNL). The segment covering 102-116 (KPNDNKKSRQIEESV) has biased composition (basic and acidic residues). A compositionally biased stretch (polar residues) spans 117 to 136 (TKGNAFSTVSTNNDSKSGQI). Over residues 200–209 (LALPTPPLPK) the composition is skewed to pro residues. Residues 297-307 (YKEESENEDPA) show a composition bias toward acidic residues. The 83-residue stretch at 352–434 (VVLYIKNLAK…KPMIIQFGRT (83 aa)) folds into the RRM 2 domain.

Component of the U11/U12 snRNPs that are part of the U12-type spliceosome. Forms a complex with U12 snRNA. Ubiquitous.

It is found in the nucleus. Component of minor spliceosome required for U12-type intron splicing and alternative splicing of many introns. Binds specifically to U12 snRNA, which is necessary for branch-point site recognition. Required for normal plant development. This chain is U11/U12 small nuclear ribonucleoprotein 65 kDa protein (SNRNP65), found in Arabidopsis thaliana (Mouse-ear cress).